Consider the following 152-residue polypeptide: Ubiquitin-conjugating enzyme E2 B (152 aa).

The UBC core domain occupies 4-150; that stretch reads PARRRLMRDF…VSAIVEQSWN (147 aa). Cysteine 88 acts as the Glycyl thioester intermediate in catalysis.

Belongs to the ubiquitin-conjugating enzyme family. In terms of assembly, interacts with RAD18, UBR2 and WAC.

It is found in the cell membrane. Its subcellular location is the nucleus. It carries out the reaction S-ubiquitinyl-[E1 ubiquitin-activating enzyme]-L-cysteine + [E2 ubiquitin-conjugating enzyme]-L-cysteine = [E1 ubiquitin-activating enzyme]-L-cysteine + S-ubiquitinyl-[E2 ubiquitin-conjugating enzyme]-L-cysteine.. It functions in the pathway protein modification; protein ubiquitination. Its function is as follows. E2 ubiquitin-conjugating enzyme that accepts ubiquitin from the ubiquitin-activating enzyme E1 and transfers it to a E3 ubiquitin-protein ligase. In vitro catalyzes 'Lys-11'-, as well as 'Lys-48'- and 'Lys-63'-linked polyubiquitination. Together with the E3 enzyme BRE1 (RNF20 and/or RNF40), plays a role in transcription regulation by catalyzing the monoubiquitination of histone H2B at 'Lys-120' to form H2BK120ub1. H2BK120ub1 gives a specific tag for epigenetic transcriptional activation, elongation by RNA polymerase II, telomeric silencing, and is also a prerequisite for H3K4me and H3K79me formation. May play a role in DNA repair. Associates to the E3 ligase RAD18 to form the UBE2B-RAD18 ubiquitin ligase complex involved in mono-ubiquitination of DNA-associated PCNA on 'Lys-164'. In association with the E3 enzyme UBR4, is involved in N-end rule-dependent protein degradation. May be involved in neurite outgrowth. The protein is Ubiquitin-conjugating enzyme E2 B (UBE2B) of Bos taurus (Bovine).